A 252-amino-acid chain; its full sequence is Imidazole glycerol phosphate synthase subunit HisF (252 aa).

Catalysis depends on residues Asp11 and Asp130.

This sequence belongs to the HisA/HisF family. As to quaternary structure, heterodimer of HisH and HisF.

It is found in the cytoplasm. The enzyme catalyses 5-[(5-phospho-1-deoxy-D-ribulos-1-ylimino)methylamino]-1-(5-phospho-beta-D-ribosyl)imidazole-4-carboxamide + L-glutamine = D-erythro-1-(imidazol-4-yl)glycerol 3-phosphate + 5-amino-1-(5-phospho-beta-D-ribosyl)imidazole-4-carboxamide + L-glutamate + H(+). The protein operates within amino-acid biosynthesis; L-histidine biosynthesis; L-histidine from 5-phospho-alpha-D-ribose 1-diphosphate: step 5/9. Its function is as follows. IGPS catalyzes the conversion of PRFAR and glutamine to IGP, AICAR and glutamate. The HisF subunit catalyzes the cyclization activity that produces IGP and AICAR from PRFAR using the ammonia provided by the HisH subunit. The polypeptide is Imidazole glycerol phosphate synthase subunit HisF (Bacillus cereus (strain ATCC 10987 / NRS 248)).